The primary structure comprises 114 residues: Turripeptide OL22 (114 aa).

Contains 6 disulfide bonds. As to expression, expressed by the venom duct.

Its subcellular location is the secreted. Its function is as follows. Acts as a neurotoxin by inhibiting an ion channel. This is Turripeptide OL22 from Iotyrris olangoensis (Sea snail).